A 261-amino-acid chain; its full sequence is Cytochrome c oxidase subunit 3 (261 aa).

Residues 1-15 (MTHQTHAYHMVNPSP) are Mitochondrial matrix-facing. The helical transmembrane segment at 16–34 (WPLTGALSALLMTSGLAMW) threads the bilayer. The Mitochondrial intermembrane portion of the chain corresponds to 35 to 40 (FHYNSM). A helical membrane pass occupies residues 41–66 (LLLTLGLMTNLLTMYQWWRDIVREST). Residues 67 to 72 (FQGHHT) are Mitochondrial matrix-facing. The chain crosses the membrane as a helical span at residues 73–105 (LVVQKGLRYGMILFIISEVFFFSGFFWAFYHSS). The Mitochondrial intermembrane portion of the chain corresponds to 106–128 (LAPTPELGGCWPPTGIHPLNPME). Residues 129–152 (VPLLNTSVLLASGVSITWAHHSLM) traverse the membrane as a helical segment. Residues 153-155 (EGN) are Mitochondrial matrix-facing. Residues 156–183 (RKHMLQALFITISLGVYFTLLQASEYYE) form a helical membrane-spanning segment. Residues 184–190 (APFTISD) are Mitochondrial intermembrane-facing. Residues 191-223 (GIYGSTFFVATGFHGLHVIIGSTFLIVCFLRQL) traverse the membrane as a helical segment. Residues 224-232 (KFHFTSNHH) are Mitochondrial matrix-facing. Residues 233 to 256 (FGFEAAAWYWHFVDVVWLFLYVSI) form a helical membrane-spanning segment. Over 257 to 261 (YWWGS) the chain is Mitochondrial intermembrane.

This sequence belongs to the cytochrome c oxidase subunit 3 family. In terms of assembly, component of the cytochrome c oxidase (complex IV, CIV), a multisubunit enzyme composed of 14 subunits. The complex is composed of a catalytic core of 3 subunits MT-CO1, MT-CO2 and MT-CO3, encoded in the mitochondrial DNA, and 11 supernumerary subunits COX4I, COX5A, COX5B, COX6A, COX6B, COX6C, COX7A, COX7B, COX7C, COX8 and NDUFA4, which are encoded in the nuclear genome. The complex exists as a monomer or a dimer and forms supercomplexes (SCs) in the inner mitochondrial membrane with NADH-ubiquinone oxidoreductase (complex I, CI) and ubiquinol-cytochrome c oxidoreductase (cytochrome b-c1 complex, complex III, CIII), resulting in different assemblies (supercomplex SCI(1)III(2)IV(1) and megacomplex MCI(2)III(2)IV(2)).

It localises to the mitochondrion inner membrane. It catalyses the reaction 4 Fe(II)-[cytochrome c] + O2 + 8 H(+)(in) = 4 Fe(III)-[cytochrome c] + 2 H2O + 4 H(+)(out). Its function is as follows. Component of the cytochrome c oxidase, the last enzyme in the mitochondrial electron transport chain which drives oxidative phosphorylation. The respiratory chain contains 3 multisubunit complexes succinate dehydrogenase (complex II, CII), ubiquinol-cytochrome c oxidoreductase (cytochrome b-c1 complex, complex III, CIII) and cytochrome c oxidase (complex IV, CIV), that cooperate to transfer electrons derived from NADH and succinate to molecular oxygen, creating an electrochemical gradient over the inner membrane that drives transmembrane transport and the ATP synthase. Cytochrome c oxidase is the component of the respiratory chain that catalyzes the reduction of oxygen to water. Electrons originating from reduced cytochrome c in the intermembrane space (IMS) are transferred via the dinuclear copper A center (CU(A)) of subunit 2 and heme A of subunit 1 to the active site in subunit 1, a binuclear center (BNC) formed by heme A3 and copper B (CU(B)). The BNC reduces molecular oxygen to 2 water molecules using 4 electrons from cytochrome c in the IMS and 4 protons from the mitochondrial matrix. In Ceratotherium simum (White rhinoceros), this protein is Cytochrome c oxidase subunit 3 (MT-CO3).